Reading from the N-terminus, the 212-residue chain is Phosphatidylserine decarboxylase proenzyme (212 aa).

The active-site Schiff-base intermediate with substrate; via pyruvic acid is Ser-182. Ser-182 is subject to Pyruvic acid (Ser); by autocatalysis.

Belongs to the phosphatidylserine decarboxylase family. PSD-A subfamily. Heterodimer of a large membrane-associated beta subunit and a small pyruvoyl-containing alpha subunit. Requires pyruvate as cofactor. Post-translationally, is synthesized initially as an inactive proenzyme. Formation of the active enzyme involves a self-maturation process in which the active site pyruvoyl group is generated from an internal serine residue via an autocatalytic post-translational modification. Two non-identical subunits are generated from the proenzyme in this reaction, and the pyruvate is formed at the N-terminus of the alpha chain, which is derived from the carboxyl end of the proenzyme. The post-translation cleavage follows an unusual pathway, termed non-hydrolytic serinolysis, in which the side chain hydroxyl group of the serine supplies its oxygen atom to form the C-terminus of the beta chain, while the remainder of the serine residue undergoes an oxidative deamination to produce ammonia and the pyruvoyl prosthetic group on the alpha chain.

The protein localises to the cell membrane. It catalyses the reaction a 1,2-diacyl-sn-glycero-3-phospho-L-serine + H(+) = a 1,2-diacyl-sn-glycero-3-phosphoethanolamine + CO2. Its pathway is phospholipid metabolism; phosphatidylethanolamine biosynthesis; phosphatidylethanolamine from CDP-diacylglycerol: step 2/2. Functionally, catalyzes the formation of phosphatidylethanolamine (PtdEtn) from phosphatidylserine (PtdSer). This Chlorobium limicola (strain DSM 245 / NBRC 103803 / 6330) protein is Phosphatidylserine decarboxylase proenzyme.